The sequence spans 93 residues: uncharacterized protein (93 aa).

The next 2 membrane-spanning stretches (helical) occupy residues 7-27 and 70-90; these read LIFLGIILMFIGFFMITLGMI and ILSVLIAILMIIWMFLFAFGI.

The protein resides in the cell membrane. This is an uncharacterized protein from Methanocaldococcus jannaschii (strain ATCC 43067 / DSM 2661 / JAL-1 / JCM 10045 / NBRC 100440) (Methanococcus jannaschii).